We begin with the raw amino-acid sequence, 358 residues long: Peptide chain release factor 1 (358 aa).

Position 233 is an N5-methylglutamine (Gln233).

The protein belongs to the prokaryotic/mitochondrial release factor family. Methylated by PrmC. Methylation increases the termination efficiency of RF1.

Its subcellular location is the cytoplasm. In terms of biological role, peptide chain release factor 1 directs the termination of translation in response to the peptide chain termination codons UAG and UAA. The sequence is that of Peptide chain release factor 1 from Listeria innocua serovar 6a (strain ATCC BAA-680 / CLIP 11262).